The chain runs to 218 residues: Adenylate kinase (218 aa).

Residue 10–15 (GAGKGT) coordinates ATP. Residues 30–59 (STGDMLRAAVKAGSPLGLKVKEVMATGGLV) form an NMP region. AMP-binding positions include Thr-31, Arg-36, 57–59 (GLV), 85–88 (GFPR), and Gln-92. Positions 122-159 (GRRVHEASGRVYHVDYNPPKVEGKDDVTGEPLVQREDD) are LID. Residues Arg-123 and 132 to 133 (VY) contribute to the ATP site. Residues Arg-156 and Arg-167 each contribute to the AMP site. Residue Gly-203 participates in ATP binding.

It belongs to the adenylate kinase family. In terms of assembly, monomer.

The protein localises to the cytoplasm. It catalyses the reaction AMP + ATP = 2 ADP. It functions in the pathway purine metabolism; AMP biosynthesis via salvage pathway; AMP from ADP: step 1/1. Functionally, catalyzes the reversible transfer of the terminal phosphate group between ATP and AMP. Plays an important role in cellular energy homeostasis and in adenine nucleotide metabolism. The chain is Adenylate kinase from Hahella chejuensis (strain KCTC 2396).